The chain runs to 466 residues: Paraneoplastic antigen Ma3 homolog (466 aa).

The disordered stretch occupies residues Arg-379–Thr-408. Residues Ser-384 to Gly-399 show a composition bias toward basic residues. A CCHC-type zinc finger spans residues Thr-415 to Asn-432. The tract at residues Gln-441–Lys-466 is disordered. Residues Ala-445 to His-460 show a composition bias toward basic and acidic residues.

The protein belongs to the PNMA family. Expressed in the cerebrum and cerebellum.

Its subcellular location is the nucleus. It localises to the nucleolus. This Mus musculus (Mouse) protein is Paraneoplastic antigen Ma3 homolog (Pnma3).